Consider the following 430-residue polypeptide: Histidine--tRNA ligase (430 aa).

The protein belongs to the class-II aminoacyl-tRNA synthetase family. In terms of assembly, homodimer.

It is found in the cytoplasm. The catalysed reaction is tRNA(His) + L-histidine + ATP = L-histidyl-tRNA(His) + AMP + diphosphate + H(+). The polypeptide is Histidine--tRNA ligase (Synechococcus sp. (strain CC9902)).